Reading from the N-terminus, the 264-residue chain is Small ribosomal subunit protein uS2 (264 aa).

The protein belongs to the universal ribosomal protein uS2 family.

The polypeptide is Small ribosomal subunit protein uS2 (rpsB) (Helicobacter pylori (strain ATCC 700392 / 26695) (Campylobacter pylori)).